The primary structure comprises 127 residues: Glycine cleavage system H protein (127 aa).

Positions 24–105 (TALVGITDFA…YEDGWMVKVS (82 aa)) constitute a Lipoyl-binding domain. Lysine 65 is modified (N6-lipoyllysine).

This sequence belongs to the GcvH family. As to quaternary structure, the glycine cleavage system is composed of four proteins: P, T, L and H. The cofactor is (R)-lipoate.

Its function is as follows. The glycine cleavage system catalyzes the degradation of glycine. The H protein shuttles the methylamine group of glycine from the P protein to the T protein. The sequence is that of Glycine cleavage system H protein from Prosthecochloris aestuarii (strain DSM 271 / SK 413).